The primary structure comprises 447 residues: Adenylosuccinate synthetase (447 aa).

Residues 35 to 41 and 63 to 65 contribute to the GTP site; these read GDEGKGK and GHT. Catalysis depends on D36, which acts as the Proton acceptor. Mg(2+) is bound by residues D36 and G63. IMP-binding positions include 36–39, 61–64, T153, R167, N245, T260, and R324; these read DEGK and NAGH. Catalysis depends on H64, which acts as the Proton donor. 320–326 provides a ligand contact to substrate; the sequence is VTTKRKR. GTP contacts are provided by residues R326, 352 to 354, and 435 to 437; these read KLD and GVG.

This sequence belongs to the adenylosuccinate synthetase family. As to quaternary structure, homodimer. It depends on Mg(2+) as a cofactor.

It is found in the cytoplasm. It catalyses the reaction IMP + L-aspartate + GTP = N(6)-(1,2-dicarboxyethyl)-AMP + GDP + phosphate + 2 H(+). It functions in the pathway purine metabolism; AMP biosynthesis via de novo pathway; AMP from IMP: step 1/2. In terms of biological role, plays an important role in the de novo pathway and in the salvage pathway of purine nucleotide biosynthesis. Catalyzes the first committed step in the biosynthesis of AMP from IMP. Plays a role in the regulation of adult life span. The chain is Adenylosuccinate synthetase from Drosophila melanogaster (Fruit fly).